Consider the following 301-residue polypeptide: Phosphatidylcholine:diacylglycerol cholinephosphotransferase 1 (301 aa).

Residues 1-39 (MSAAAAETDVSLRRRSNSLNGNHTNGVAIDGTLDNNNRR) form a disordered region. A run of 5 helical transmembrane segments spans residues 88–108 (HWIP…EYTL), 141–161 (VLAA…VWTW), 171–191 (IAAL…QLPL), 202–222 (FPVG…GSMI), and 255–275 (GHYT…DSLA). Residues His-216, His-256, and Asp-260 contribute to the active site.

This sequence belongs to the phosphatidylcholine:diacylglycerol cholinephosphotransferase family.

It is found in the membrane. The catalysed reaction is 1,2-ditetradecanoyl-sn-glycero-3-phosphocholine + 1,2-di-(9Z-octadecenoyl)-sn-glycerol = 1,2-ditetradecanoyl-sn-glycerol + 1,2-di-(9Z-octadecenoyl)-sn-glycero-3-phosphocholine. Its function is as follows. Functions as a phosphatidylcholine:diacylglycerol cholinephosphotransferase that catalyzes the transfer of the phosphocholine headgroup from phosphatidylcholine (PC) to diacylglycerol, a major reaction for the transfer of 18:1 into phosphatidylcholine for desaturation and also for the reverse transfer of 18:2 and 18:3 into the triacylglycerols synthesis pathway. This is Phosphatidylcholine:diacylglycerol cholinephosphotransferase 1 from Arabidopsis thaliana (Mouse-ear cress).